The chain runs to 385 residues: 1-deoxy-D-xylulose 5-phosphate reductoisomerase (385 aa).

Residues T10, G11, S12, I13, and N124 each coordinate NADPH. K125 serves as a coordination point for 1-deoxy-D-xylulose 5-phosphate. E126 is an NADPH binding site. A Mn(2+)-binding site is contributed by D150. Residues S151, E152, S176, and H199 each coordinate 1-deoxy-D-xylulose 5-phosphate. A Mn(2+)-binding site is contributed by E152. G205 provides a ligand contact to NADPH. Residues S212, N217, K218, and E221 each contribute to the 1-deoxy-D-xylulose 5-phosphate site. E221 contributes to the Mn(2+) binding site.

It belongs to the DXR family. Requires Mg(2+) as cofactor. Mn(2+) serves as cofactor.

The catalysed reaction is 2-C-methyl-D-erythritol 4-phosphate + NADP(+) = 1-deoxy-D-xylulose 5-phosphate + NADPH + H(+). The protein operates within isoprenoid biosynthesis; isopentenyl diphosphate biosynthesis via DXP pathway; isopentenyl diphosphate from 1-deoxy-D-xylulose 5-phosphate: step 1/6. Functionally, catalyzes the NADPH-dependent rearrangement and reduction of 1-deoxy-D-xylulose-5-phosphate (DXP) to 2-C-methyl-D-erythritol 4-phosphate (MEP). The sequence is that of 1-deoxy-D-xylulose 5-phosphate reductoisomerase from Clostridium botulinum (strain Eklund 17B / Type B).